The chain runs to 124 residues: Small ribosomal subunit protein eS25 (124 aa).

Residues 1–22 (MPPKDSKQKKDAGKSKKDKDPV) show a composition bias toward basic and acidic residues. The disordered stretch occupies residues 1 to 37 (MPPKDSKQKKDAGKSKKDKDPVNKSGGKAKKKKWSKG). A compositionally biased stretch (basic residues) spans 27-37 (GKAKKKKWSKG).

Belongs to the eukaryotic ribosomal protein eS25 family. As to quaternary structure, component of the small ribosomal subunit.

It is found in the cytoplasm. Component of the small ribosomal subunit. The ribosome is a large ribonucleoprotein complex responsible for the synthesis of proteins in the cell. In Danio rerio (Zebrafish), this protein is Small ribosomal subunit protein eS25 (rps25).